A 381-amino-acid polypeptide reads, in one-letter code: Protein COS6 (381 aa).

The Cytoplasmic portion of the chain corresponds to 1-42; it reads MKENELKNEKSVDVLSVKQLESQKTVLPQDLFRSSFTWFCYE. The chain crosses the membrane as a helical span at residues 43–63; the sequence is IYKSLVFRIWMLLWLPLSVWW. Over 64 to 69 the chain is Extracellular; that stretch reads KLSNNW. Residues 70-90 traverse the membrane as a helical segment; that stretch reads IYPLMVSLLVLFWGPVFVLVI. Topologically, residues 91–381 are cytoplasmic; the sequence is FRLSRKRSLS…QLSCSEESLA (291 aa).

It belongs to the DUP/COS family.

The protein localises to the membrane. This chain is Protein COS6 (COS6), found in Saccharomyces cerevisiae (strain ATCC 204508 / S288c) (Baker's yeast).